Reading from the N-terminus, the 639-residue chain is Complex I assembly factor Egm, mitochondrial (639 aa).

The transit peptide at 1–26 directs the protein to the mitochondrion; the sequence is MRPNLFSGASRLLTYSRNGKLLTRGR. Residues 23–65 are disordered; the sequence is TRGRSTKATSSSLDSQHQDAATTEGGRAESVEESPEQQRKLPT. The segment covering 28–43 has biased composition (polar residues); the sequence is TKATSSSLDSQHQDAA. A compositionally biased stretch (basic and acidic residues) spans 48–65; the sequence is GRAESVEESPEQQRKLPT.

This sequence belongs to the acyl-CoA dehydrogenase family. In terms of assembly, associates with mitochondrial complex I assembly intermediates during its biogenesis. It depends on FAD as a cofactor.

Its subcellular location is the mitochondrion. In terms of biological role, as part of the MCIA complex, primarily participates in the assembly of the mitochondrial complex I and therefore plays a role in oxidative phosphorylation. In Drosophila melanogaster (Fruit fly), this protein is Complex I assembly factor Egm, mitochondrial.